Consider the following 140-residue polypeptide: 3-hydroxyacyl-[acyl-carrier-protein] dehydratase FabZ (140 aa).

Residue histidine 47 is part of the active site.

Belongs to the thioester dehydratase family. FabZ subfamily.

It is found in the cytoplasm. It carries out the reaction a (3R)-hydroxyacyl-[ACP] = a (2E)-enoyl-[ACP] + H2O. Functionally, involved in unsaturated fatty acids biosynthesis. Catalyzes the dehydration of short chain beta-hydroxyacyl-ACPs and long chain saturated and unsaturated beta-hydroxyacyl-ACPs. The protein is 3-hydroxyacyl-[acyl-carrier-protein] dehydratase FabZ of Streptococcus suis (strain 98HAH33).